The sequence spans 267 residues: Ubiquinone biosynthesis protein COQ4, mitochondrial (267 aa).

The transit peptide at Met-1 to Phe-17 directs the protein to the mitochondrion. Residues His-153, Asp-154, His-157, and Glu-169 each coordinate Zn(2+).

Belongs to the COQ4 family. In terms of assembly, component of a multi-subunit COQ enzyme complex, composed of at least COQ3, COQ4, COQ5, COQ6, COQ7 and COQ9. Zn(2+) is required as a cofactor.

The protein localises to the mitochondrion inner membrane. It catalyses the reaction a 4-hydroxy-3-methoxy-5-(all-trans-polyprenyl)benzoate + H(+) = a 2-methoxy-6-(all-trans-polyprenyl)phenol + CO2. It participates in cofactor biosynthesis; ubiquinone biosynthesis. Lyase that catalyzes the C1-decarboxylation of 4-hydroxy-3-methoxy-5-(all-trans-polyprenyl)benzoic acid into 2-methoxy-6-(all-trans-polyprenyl)phenol during ubiquinone biosynthesis. The polypeptide is Ubiquinone biosynthesis protein COQ4, mitochondrial (Arthroderma otae (strain ATCC MYA-4605 / CBS 113480) (Microsporum canis)).